The sequence spans 346 residues: Phosphate acyltransferase (346 aa).

The protein belongs to the PlsX family. As to quaternary structure, homodimer. Probably interacts with PlsY.

Its subcellular location is the cytoplasm. It catalyses the reaction a fatty acyl-[ACP] + phosphate = an acyl phosphate + holo-[ACP]. The protein operates within lipid metabolism; phospholipid metabolism. Catalyzes the reversible formation of acyl-phosphate (acyl-PO(4)) from acyl-[acyl-carrier-protein] (acyl-ACP). This enzyme utilizes acyl-ACP as fatty acyl donor, but not acyl-CoA. This is Phosphate acyltransferase from Psychromonas ingrahamii (strain DSM 17664 / CCUG 51855 / 37).